A 966-amino-acid polypeptide reads, in one-letter code: Protein mes-1 (966 aa).

The first 19 residues, 1–19 (MKIHHFLTLLCTFLPLTTT), serve as a signal peptide directing secretion. The Extracellular portion of the chain corresponds to 20–470 (ALTNSTPLSL…QASDIPTSVE (451 aa)). N-linked (GlcNAc...) asparagine glycans are attached at residues asparagine 62, asparagine 126, asparagine 183, asparagine 214, asparagine 251, and asparagine 372. A helical transmembrane segment spans residues 471–491 (LMAVVLATSAIFALIALFLLY). Residues 492–966 (RKRKRDKKAR…FKSVNVAATV (475 aa)) are Cytoplasmic-facing. Residues 656-966 (HNFNERIEKQ…FKSVNVAATV (311 aa)) form the Protein kinase domain. ATP-binding positions include 662-670 (IEKQAYWLM) and lysine 685.

The protein belongs to the protein kinase superfamily.

The protein resides in the cell membrane. During early embryogenesis, controls asymmetric cell division and the asymmetric localization of P granules of germline precursor P2 and its descendant P3. Probably upstream of tyrosine kinase src-1, plays a role in endoderm development by controlling spindle orientation during EMS blastomere cell division. Controls EMS spindle orientation probably by promoting lin-5 and gpr-1/2 enrichment at, and let-99 exclusion from the junction between P2 and EMS cells. This is Protein mes-1 from Caenorhabditis elegans.